We begin with the raw amino-acid sequence, 209 residues long: Guanylyl cyclase-activating protein 3 (209 aa).

Residue G2 is the site of N-myristoyl glycine attachment. At N3 the chain carries Deamidated asparagine. EF-hand domains follow at residues 15 to 50 (PTQE…QGLN), 52 to 87 (KANK…IMQE), 88 to 123 (KMEQ…VQAL), and 130 to 165 (SPEE…DQDL). Residues D65, N67, D69, E76, D101, D103, N105, S107, E112, D143, N145, D147, E149, and E154 each contribute to the Ca(2+) site. The segment at 187 to 209 (QPDMETDSSKSPDKAGLGKVKMK) is disordered.

Retina.

Stimulates guanylyl cyclase 1 (GC1) and GC2 when free calcium ions concentration is low and inhibits guanylyl cyclases when free calcium ions concentration is elevated. This Ca(2+)-sensitive regulation of guanylyl cyclase (GC) is a key event in recovery of the dark state of rod photoreceptors following light exposure. This is Guanylyl cyclase-activating protein 3 (GUCA1C) from Homo sapiens (Human).